The sequence spans 188 residues: PRA1 family protein 3 (188 aa).

The residue at position 1 (methionine 1) is an N-acetylmethionine. Topologically, residues methionine 1–arginine 35 are cytoplasmic. Transmembrane regions (helical) follow at residues valine 36 to serine 56 and valine 57 to phenylalanine 77. The Cytoplasmic portion of the chain corresponds to threonine 78–methionine 93. 2 helical membrane passes run lysine 94–serine 114 and leucine 115–isoleucine 135. The tract at residues methionine 103–glycine 117 is required for homodimer formation and heterodimer formation with ARL6IP1. The Cytoplasmic portion of the chain corresponds to histidine 136–glutamate 188. Residues histidine 136–glutamate 188 are targeting to endoplasmic reticulum membrane.

It belongs to the PRA1 family. Homodimer. Heterodimer with ARL6IP1. Forms multimers. Interacts with ARL6. Interacts with prenylated RAB1A and RAB3A. Interacts with SLC1A1/EAAC1. Interacts with RTN2 (via first transmembrane domain). Does not interact with VAMP1, VAMP2 or VAMP3.

It localises to the endoplasmic reticulum membrane. The protein localises to the cell membrane. It is found in the cytoplasm. The protein resides in the cytoskeleton. Its function is as follows. Regulates intracellular concentrations of taurine and glutamate. Negatively modulates SLC1A1/EAAC1 glutamate transport activity by decreasing its affinity for glutamate in a PKC activity-dependent manner. Plays a role in the retention of SLC1A1/EAAC1 in the endoplasmic reticulum. This Bos taurus (Bovine) protein is PRA1 family protein 3 (ARL6IP5).